A 1044-amino-acid polypeptide reads, in one-letter code: Phosphatidylinositol 4,5-bisphosphate 3-kinase catalytic subunit delta isoform (1044 aa).

Residues 16 to 105 enclose the PI3K-ABD domain; that stretch reads ENQSVVVDFL…LPVLRLVARE (90 aa). One can recognise a PI3K-RBD domain in the interval 187 to 278; sequence NRALLVNVKF…GLTPHLTMVH (92 aa). Residues 287-312 are disordered; it reads DEQSNPAPQVQKPRAKPPPIPAKKPS. In terms of domain architecture, C2 PI3K-type spans 319-476; the sequence is LEQPFRIELI…SAAALLICLP (158 aa). The 178-residue stretch at 497–674 folds into the PIK helical domain; it reads HSECVHVTEE…GLILEAYCRG (178 aa). Tyr-524 carries the post-translational modification Phosphotyrosine. Positions 745-1027 constitute a PI3K/PI4K catalytic domain; the sequence is CVEQCTFMDS…KFNEALRESW (283 aa). The interval 751-757 is G-loop; that stretch reads FMDSKMK. The tract at residues 890–898 is catalytic loop; that stretch reads GIGDRHSDN. Residues 909–935 form an activation loop region; it reads HIDFGHFLGNFKTKFGINRERVPFILT. Phosphoserine; by autocatalysis is present on Ser-1039.

The protein belongs to the PI3/PI4-kinase family. Heterodimer of a catalytic subunit PIK3CD and a p85 regulatory subunit (PIK3R1, PIK3R2 or PIK3R3). Interacts with ERAS. Interacts with HRAS. Post-translationally, autophosphorylation on Ser-1039 results in the almost complete inactivation of the lipid kinase activity. In terms of tissue distribution, in humans, the highest levels of expression are seen in peripheral blood mononuclear cells, spleen, and thymus, and low levels of expression in testes, uterus, colon, and small intestine but not in other tissues examined including prostate, heart, brain, and liver. Isoform 2 is expressed in normal thymus, lung and spleen tissues, and is detected at low levels in normal lysates from colon and ovarian biopsies, at elevated levels in lysates from colorectal tumors and is abundantly expressed in some ovarian tumors (at protein level). Both isoform 1 and isoform 2 are widely expressed. Isoform 1 is expressed predominantly in leukocytes.

The protein localises to the cytoplasm. It catalyses the reaction a 1,2-diacyl-sn-glycero-3-phospho-(1D-myo-inositol-4,5-bisphosphate) + ATP = a 1,2-diacyl-sn-glycero-3-phospho-(1D-myo-inositol-3,4,5-trisphosphate) + ADP + H(+). The catalysed reaction is a 1,2-diacyl-sn-glycero-3-phospho-(1D-myo-inositol) + ATP = a 1,2-diacyl-sn-glycero-3-phospho-(1D-myo-inositol-3-phosphate) + ADP + H(+). The enzyme catalyses 1-octadecanoyl-2-(5Z,8Z,11Z,14Z)-eicosatetraenoyl-sn-glycero-3-phospho-1D-myo-inositol 4,5-bisphosphate + ATP = 1-octadecanoyl-2-(5Z,8Z,11Z,14Z-eicosatetraenoyl)-sn-glycero-3-phospho-(1D-myo-inositol 3,4,5-triphosphate) + ADP + H(+). It participates in phospholipid metabolism; phosphatidylinositol phosphate biosynthesis. With respect to regulation, activated by growth factors and cytokine receptors through a tyrosine-kinase-dependent mechanism. Activated by RAS. IC87114 inhibits lipid kinase activity and is selective in cells at doses up to 5-10 uM. IC87114 blocks T-cell receptor signaling in naive and memory T-cells and reduces cytokine production by memory T-cells. In terms of biological role, phosphoinositide-3-kinase (PI3K) phosphorylates phosphatidylinositol (PI) and its phosphorylated derivatives at position 3 of the inositol ring to produce 3-phosphoinositides. Uses ATP and PtdIns(4,5)P2 (phosphatidylinositol 4,5-bisphosphate) to generate phosphatidylinositol 3,4,5-trisphosphate (PIP3). PIP3 plays a key role by recruiting PH domain-containing proteins to the membrane, including AKT1 and PDPK1, activating signaling cascades involved in cell growth, survival, proliferation, motility and morphology. Mediates immune responses. Plays a role in B-cell development, proliferation, migration, and function. Required for B-cell receptor (BCR) signaling. Mediates B-cell proliferation response to anti-IgM, anti-CD40 and IL4 stimulation. Promotes cytokine production in response to TLR4 and TLR9. Required for antibody class switch mediated by TLR9. Involved in the antigen presentation function of B-cells. Involved in B-cell chemotaxis in response to CXCL13 and sphingosine 1-phosphate (S1P). Required for proliferation, signaling and cytokine production of naive, effector and memory T-cells. Required for T-cell receptor (TCR) signaling. Mediates TCR signaling events at the immune synapse. Activation by TCR leads to antigen-dependent memory T-cell migration and retention to antigenic tissues. Together with PIK3CG participates in T-cell development. Contributes to T-helper cell expansion and differentiation. Required for T-cell migration mediated by homing receptors SELL/CD62L, CCR7 and S1PR1 and antigen dependent recruitment of T-cells. Together with PIK3CG is involved in natural killer (NK) cell development and migration towards the sites of inflammation. Participates in NK cell receptor activation. Plays a role in NK cell maturation and cytokine production. Together with PIK3CG is involved in neutrophil chemotaxis and extravasation. Together with PIK3CG participates in neutrophil respiratory burst. Plays important roles in mast-cell development and mast cell mediated allergic response. Involved in stem cell factor (SCF)-mediated proliferation, adhesion and migration. Required for allergen-IgE-induced degranulation and cytokine release. The lipid kinase activity is required for its biological function. Isoform 2 may be involved in stabilizing total RAS levels, resulting in increased ERK phosphorylation and increased PI3K activity. This Homo sapiens (Human) protein is Phosphatidylinositol 4,5-bisphosphate 3-kinase catalytic subunit delta isoform (PIK3CD).